A 117-amino-acid chain; its full sequence is DNA-directed RNA polymerase II subunit RPB11 (117 aa).

Met1 bears the N-acetylmethionine mark.

Belongs to the archaeal Rpo11/eukaryotic RPB11/RPC19 RNA polymerase subunit family. Component of the RNA polymerase II (Pol II) core complex consisting of 12 subunits: a ten-subunit catalytic core composed of POLR2A/RPB1, POLR2B/RPB2, POLR2C/RPB3, POLR2I/RPB9, POLR2J/RPB11, POLR2E/RPABC1, POLR2F/RPABC2, POLR2H/RPABC3, POLR2K/RPABC4 and POLR2L/RPABC5 and a mobile stalk composed of two subunits POLR2D/RPB4 and POLR2G/RPB7, protruding from the core and functioning primarily in transcription initiation. Part of Pol II(G) complex, in which Pol II core associates with an additional subunit POLR2M; unlike conventional Pol II, Pol II(G) functions as a transcriptional repressor. Part of TBP-based Pol II pre-initiation complex (PIC), in which Pol II core assembles with general transcription factors and other specific initiation factors including GTF2E1, GTF2E2, GTF2F1, GTF2F2, TCEA1, ERCC2, ERCC3, GTF2H2, GTF2H3, GTF2H4, GTF2H5, GTF2A1, GTF2A2, GTF2B and TBP; this large multi-subunit PIC complex mediates DNA unwinding and targets Pol II core to the transcription start site where the first phosphodiester bond forms. Interacts with PTPN6; this interaction promotes the recruitment of RNA pol II to the PCK1 promoter.

The protein resides in the nucleus. DNA-dependent RNA polymerase catalyzes the transcription of DNA into RNA using the four ribonucleoside triphosphates as substrates. Component of RNA polymerase II which synthesizes mRNA precursors and many functional non-coding RNAs. Pol II is the central component of the basal RNA polymerase II transcription machinery. It is composed of mobile elements that move relative to each other. POLR2J/RPB11 is part of the core element with the central large cleft. This Bos taurus (Bovine) protein is DNA-directed RNA polymerase II subunit RPB11 (POLR2J).